A 61-amino-acid polypeptide reads, in one-letter code: Photosystem II reaction center protein K (61 aa).

Positions 1-24 (MINIFSFICIYLHSALYSSSFFFG) are excised as a propeptide. A helical transmembrane segment spans residues 40-60 (MPVIPLFFFLLAFVWQAAVSF).

It belongs to the PsbK family. In terms of assembly, PSII is composed of 1 copy each of membrane proteins PsbA, PsbB, PsbC, PsbD, PsbE, PsbF, PsbH, PsbI, PsbJ, PsbK, PsbL, PsbM, PsbT, PsbX, PsbY, PsbZ, Psb30/Ycf12, at least 3 peripheral proteins of the oxygen-evolving complex and a large number of cofactors. It forms dimeric complexes.

The protein resides in the plastid. It localises to the chloroplast thylakoid membrane. Functionally, one of the components of the core complex of photosystem II (PSII). PSII is a light-driven water:plastoquinone oxidoreductase that uses light energy to abstract electrons from H(2)O, generating O(2) and a proton gradient subsequently used for ATP formation. It consists of a core antenna complex that captures photons, and an electron transfer chain that converts photonic excitation into a charge separation. This is Photosystem II reaction center protein K from Pelargonium hortorum (Common geranium).